The following is a 643-amino-acid chain: Zinc finger protein 64 (643 aa).

C2H2-type zinc fingers lie at residues 173–195, 201–223, 229–251, 297–322, 328–350, 356–378, 384–406, 412–434, 440–463, 465–487, and 493–515; these read HKCE…MRCH, YKCK…LRIH, FKCQ…LRSH, FNCR…LRIH, HKCH…LRIH, YKCQ…LRSH, FQCW…MIVH, FKCE…RIKH, FKCL…SRLH, and EKCP…SRVH. Zn(2+) contacts are provided by cysteine 495, cysteine 498, histidine 511, histidine 515, cysteine 523, cysteine 526, histidine 539, and histidine 544. The span at 538–552 shows a compositional bias: basic and acidic residues; that stretch reads KHIDKVHREGAKTEN. Residues 538-571 form a disordered region; that stretch reads KHIDKVHREGAKTENRAPPGKDGPGESGPHHVPN. A C2H2-type 12 zinc finger spans residues 578–600; sequence FGCDKCGASFVRDDSLRCHRKQH.

This sequence belongs to the krueppel C2H2-type zinc-finger protein family. In terms of assembly, interacts with NOTCH1. As to expression, widely expressed. Expressed in the brain, spleen, liver, and heart.

It localises to the nucleus. Its function is as follows. May be involved in the regulation of mesenchymal cell differentiation through transactivation of NOTCH1 target genes. The sequence is that of Zinc finger protein 64 from Mus musculus (Mouse).